The chain runs to 431 residues: Trigger factor (431 aa).

One can recognise a PPIase FKBP-type domain in the interval 158–243 (GDLVAVETWS…VAEVSEPVVP (86 aa)).

This sequence belongs to the FKBP-type PPIase family. Tig subfamily.

It is found in the cytoplasm. It catalyses the reaction [protein]-peptidylproline (omega=180) = [protein]-peptidylproline (omega=0). Its function is as follows. Involved in protein export. Acts as a chaperone by maintaining the newly synthesized protein in an open conformation. Functions as a peptidyl-prolyl cis-trans isomerase. The chain is Trigger factor from Stenotrophomonas maltophilia (strain R551-3).